The chain runs to 458 residues: MSSKDNTCPPPGPGHINGFHVPHYAFFFPHMLGGMSXTGGLPGVQHQPPLSGYSTPSPATIETQSTSSEEIVPSPPTPPPLPRIYKPCFVCQDKSSGYHYGVSACEGCKGFFRRSIQKNMVYTCHRDKNCIINKVTRNRCQYCRLQKCFEVGMSKESVRNDRNKKKKESPKPEAIESYILSPETQDLIEKVQKAHQETFPALCQLGKYTTSFSSEQRVSLDIDLWDKFSELSTKCIIKTVEFAKQLPGFTTLTIADQITLLKSACLDILILRICTRYTPDQDTMTFSDGLTLNRTQMHNAGFGPLTDLVFAFANQPVPLEMDDAETGLLSAICLICGDRQDLEQPDKVDKLQEPLLEALKIYVRTRRPQKPHMFPKMLMKITDLRTVSAKGAERVITLKMEIPGAMPLIQEMLENSEGLDTLGGGASSDAPVTPVAPGSCSPSLSPSSTHSSPSTHSP.

The interval 1–87 (MSSKDNTCPP…PPPLPRIYKP (87 aa)) is modulating. The segment at 39-78 (GGLPGVQHQPPLSGYSTPSPATIETQSTSSEEIVPSPPTP) is disordered. A compositionally biased stretch (polar residues) spans 52-69 (GYSTPSPATIETQSTSSE). 2 consecutive NR C4-type zinc fingers follow at residues 88 to 108 (CFVC…CEGC) and 124 to 148 (CHRD…LQKC). Residues 88–153 (CFVCQDKSSG…RLQKCFEVGM (66 aa)) constitute a DNA-binding region (nuclear receptor). The hinge stretch occupies residues 154–182 (SKESVRNDRNKKKKESPKPEAIESYILSP). Residues 183–417 (ETQDLIEKVQ…LIQEMLENSE (235 aa)) form the NR LBD domain. The 9aaTAD motif lies at 407-415 (PLIQEMLEN). Positions 419 to 458 (LDTLGGGASSDAPVTPVAPGSCSPSLSPSSTHSSPSTHSP) are disordered. Residues 439–458 (SCSPSLSPSSTHSSPSTHSP) show a composition bias toward low complexity.

Belongs to the nuclear hormone receptor family. NR1 subfamily. Heterodimer; with an rxr molecule. Binds DNA preferentially as a rar/rxr heterodimer.

It is found in the nucleus. Receptor for retinoic acid. Retinoic acid receptors bind as heterodimers to their target response elements in response to their ligands, all-trans or 9-cis retinoic acid, and regulate gene expression in various biological processes. The rar/rxr heterodimers bind to the retinoic acid response elements (RARE) composed of tandem 5'-AGGTCA-3' sites known as DR1-DR5. Required for primary neurogenesis and for anteroposterior neural patterning. In Xenopus laevis (African clawed frog), this protein is Retinoic acid receptor alpha (rara).